The sequence spans 782 residues: Semaphorin-3G (782 aa).

Residues 1 to 22 form the signal peptide; that stretch reads MAPSAWAICWLLGGLLLHGGSS. Residues 32 to 519 form the Sema domain; the sequence is RLRLSYRDLL…SRLGVAQLRL (488 aa). Residue Asn44 is glycosylated (N-linked (GlcNAc...) asparagine). A disulfide bridge links Cys105 with Cys116. Asn127 carries N-linked (GlcNAc...) asparagine glycosylation. Disulfide bonds link Cys134–Cys143, Cys270–Cys382, Cys294–Cys342, Cys522–Cys540, and Cys603–Cys655. The region spanning 569 to 671 is the Ig-like C2-type domain; it reads PALQCLGQSQ…FSQTVVRLAL (103 aa).

It belongs to the semaphorin family.

It is found in the secreted. In terms of biological role, has chemorepulsive activities for sympathetic axons. Ligand of NRP2. The chain is Semaphorin-3G (SEMA3G) from Homo sapiens (Human).